The sequence spans 76 residues: Membrane protein UL43 homolog (76 aa).

2 helical membrane passes run 7–27 and 54–74; these read AVCV…SLAF and ISRW…ATII.

The protein belongs to the alphaherpesvirinae HHV-1 UL43 family.

The protein resides in the membrane. This chain is Membrane protein UL43 homolog, found in Equus caballus (Horse).